A 1133-amino-acid polypeptide reads, in one-letter code: Lysylphosphatidylglycerol biosynthesis bifunctional protein LysX (1133 aa).

The tract at residues 1 to 626 is phosphatidylglycerol lysyltransferase; sequence MTTVDASPGI…LLHHDGSTPD (626 aa). Helical transmembrane passes span 43 to 63, 82 to 102, 109 to 129, 140 to 160, 177 to 197, 233 to 253, and 575 to 595; these read VPAAAGWTVGVIATLSLIASV, LFNFPDTSIAWSFVLALLAAA, IAWLLLLGNMVLAAVLNAVDM, FGENLGFAVHVVAILLLVLSY, AVLVAGDVIGILLSLGLVELF, LNAIFGLFGALALIMATIVLF, and LIPRVGVASVIAEGFLVLPFS. Residues 627-1133 form a lysine--tRNA ligase region; the sequence is VSGLQTADVD…TLPFPLAKPH (507 aa). Mg(2+) is bound by residues D1045 and E1052.

In the N-terminal section; belongs to the LPG synthetase family. This sequence in the C-terminal section; belongs to the class-II aminoacyl-tRNA synthetase family. Mg(2+) is required as a cofactor.

It localises to the cell membrane. The enzyme catalyses tRNA(Lys) + L-lysine + ATP = L-lysyl-tRNA(Lys) + AMP + diphosphate. It carries out the reaction L-lysyl-tRNA(Lys) + a 1,2-diacyl-sn-glycero-3-phospho-(1'-sn-glycerol) = a 1,2-diacyl-sn-glycero-3-phospho-1'-(3'-O-L-lysyl)-sn-glycerol + tRNA(Lys). Functionally, catalyzes the production of L-lysyl-tRNA(Lys)transfer and the transfer of a lysyl group from L-lysyl-tRNA(Lys) to membrane-bound phosphatidylglycerol (PG), which produces lysylphosphatidylglycerol (LPG), one of the components of the bacterial membrane with a positive net charge. LPG synthesis contributes to the resistance to cationic antimicrobial peptides (CAMPs) and likely protects M.tuberculosis against the CAMPs produced by competiting microorganisms (bacteriocins). In fact, the modification of anionic phosphatidylglycerol with positively charged L-lysine results in repulsion of the peptides. The chain is Lysylphosphatidylglycerol biosynthesis bifunctional protein LysX (lysX) from Mycobacterium leprae (strain Br4923).